Consider the following 151-residue polypeptide: Large ribosomal subunit protein bL9 (151 aa).

The protein belongs to the bacterial ribosomal protein bL9 family.

In terms of biological role, binds to the 23S rRNA. This is Large ribosomal subunit protein bL9 from Chlorobium chlorochromatii (strain CaD3).